Reading from the N-terminus, the 253-residue chain is Sulfate transporter CysZ (253 aa).

4 consecutive transmembrane segments (helical) span residues 31 to 51 (FVIL…WWLF), 72 to 92 (LSYL…GYFF), 151 to 171 (IVLL…PVLW), and 222 to 242 (IPVL…AMWV).

The protein belongs to the CysZ family.

The protein localises to the cell inner membrane. Its function is as follows. High affinity, high specificity proton-dependent sulfate transporter, which mediates sulfate uptake. Provides the sulfur source for the cysteine synthesis pathway. This is Sulfate transporter CysZ from Salmonella paratyphi A (strain AKU_12601).